Reading from the N-terminus, the 293-residue chain is Excinuclease cho (293 aa).

A GIY-YIG domain is found at 33–108 (ALPGVYIFHS…IKEQQPLFNK (76 aa)).

Incises the DNA at the 3' side of a lesion during nucleotide excision repair. Incises the DNA farther away from the lesion than UvrC. Not able to incise the 5' site of a lesion. When a lesion remains because UvrC is not able to induce the 3' incision, Cho incises the DNA. Then UvrC makes the 5' incision. The combined action of Cho and UvrC broadens the substrate range of nucleotide excision repair. The sequence is that of Excinuclease cho (cho) from Salmonella typhimurium (strain LT2 / SGSC1412 / ATCC 700720).